A 366-amino-acid chain; its full sequence is Chorismate synthase (366 aa).

NADP(+) contacts are provided by Arg-48 and Arg-54. FMN contacts are provided by residues 125–127 (RSS), 238–239 (NA), Gly-278, 293–297 (KPTSS), and Arg-319.

Belongs to the chorismate synthase family. In terms of assembly, homotetramer. The cofactor is FMNH2.

The enzyme catalyses 5-O-(1-carboxyvinyl)-3-phosphoshikimate = chorismate + phosphate. It participates in metabolic intermediate biosynthesis; chorismate biosynthesis; chorismate from D-erythrose 4-phosphate and phosphoenolpyruvate: step 7/7. In terms of biological role, catalyzes the anti-1,4-elimination of the C-3 phosphate and the C-6 proR hydrogen from 5-enolpyruvylshikimate-3-phosphate (EPSP) to yield chorismate, which is the branch point compound that serves as the starting substrate for the three terminal pathways of aromatic amino acid biosynthesis. This reaction introduces a second double bond into the aromatic ring system. This Paraburkholderia phymatum (strain DSM 17167 / CIP 108236 / LMG 21445 / STM815) (Burkholderia phymatum) protein is Chorismate synthase.